The sequence spans 186 residues: Early nodulin-like protein 13 (186 aa).

An N-terminal signal peptide occupies residues 1 to 23; sequence MAQRTLVATFFLIFFLLTNLVCS. The 105-residue stretch at 24 to 128 folds into the Phytocyanin domain; sequence KEIIVGGKTS…GEKLHIVVMS (105 aa). Cysteines 82 and 116 form a disulfide. Residues asparagine 83 and asparagine 90 are each glycosylated (N-linked (GlcNAc...) asparagine). Residue alanine 165 is the site of GPI-anchor amidated alanine attachment. Positions 166-186 are cleaved as a propeptide — removed in mature form; that stretch reads SSLTRQVGVLGFVGLLAIVLL.

It belongs to the early nodulin-like (ENODL) family. Mostly expressed in seedlings, siliques and flowers, and, to a lower extent, in roots, stems and seeds, but barely in leaves.

The protein localises to the cell membrane. Functionally, may act as a carbohydrate transporter. Required, together with ENODL11, ENODL12, ENODL13, ENODL14 and ENODL15, for male-female communication and pollen tube reception and burst at the synergid cell surface of the female gametophyte. In Arabidopsis thaliana (Mouse-ear cress), this protein is Early nodulin-like protein 13.